The following is a 444-amino-acid chain: MLANVIVIGAQWGDEGKGKITDLLSRSADVVVRPQGGVNAGHTIVVNDQTFKLHLIPSGILYPDTECIIGSGTVIDPKVLLQEFDQLEALDVSLDRLYISQTAHVTMPFHRLLDQASEEKRGEHKIGTTGRGIGPTYADKSERMGIRVVDLMNPEILRKKLLWTVEYKNVVLDKLYDLPPLDPETVIAEYTTYADRLRPHVVDSSLKIYDAIHQRKNILFEGAQGTLLDLDHGTYPYVTSSNPIAGGACVGAGIGPTMIDRVIGVAKAYTTRVGEGPFPTELDGELNQHLCDRGAEFGTTTGRRRRCGWFDGVIGRYAVRINGLDCLAITKLDVLDQLAEIKVCVAYELDGKTCDHFPGNAAEFARCQPIYKTLPGWQCSTEECRTLEDLPPQALDYLKFLAELMEVPIAIVSLGASRDQTIIVEDPIHGPKRALLYANGDPLA.

Residues 13 to 19 (GDEGKGK) and 41 to 43 (GHT) each bind GTP. Asp14 (proton acceptor) is an active-site residue. Residues Asp14 and Gly41 each coordinate Mg(2+). IMP is bound by residues 14 to 17 (DEGK), 39 to 42 (NAGH), Thr129, Arg143, Gln224, Thr239, and Arg303. His42 functions as the Proton donor in the catalytic mechanism. Residue 299–305 (TTTGRRR) coordinates substrate. Residues Arg305, 331-333 (KLD), and 413-415 (SLG) contribute to the GTP site.

This sequence belongs to the adenylosuccinate synthetase family. As to quaternary structure, homodimer. The cofactor is Mg(2+).

Its subcellular location is the cytoplasm. The catalysed reaction is IMP + L-aspartate + GTP = N(6)-(1,2-dicarboxyethyl)-AMP + GDP + phosphate + 2 H(+). It participates in purine metabolism; AMP biosynthesis via de novo pathway; AMP from IMP: step 1/2. Its function is as follows. Plays an important role in the de novo pathway of purine nucleotide biosynthesis. Catalyzes the first committed step in the biosynthesis of AMP from IMP. The protein is Adenylosuccinate synthetase of Synechocystis sp. (strain ATCC 27184 / PCC 6803 / Kazusa).